Consider the following 733-residue polypeptide: FYVE, RhoGEF and PH domain-containing protein 3 (733 aa).

Composition is skewed to polar residues over residues 1-11 (MELGRSSSTPQ), 47-60 (HSSS…STRE), and 106-117 (ETASDSRVPQDN). A disordered region spans residues 1-134 (MELGRSSSTP…GVGEEPDPKV (134 aa)). Over residues 118–129 (PQEEEDSGVGEE) the composition is skewed to acidic residues. S124 carries the post-translational modification Phosphoserine. In terms of domain architecture, DH spans 153–337 (KLLHIAQELL…STAADHSNAA (185 aa)). The PH 1 domain occupies 366–465 (ELIKEGSIQK…WIQVIQATVE (100 aa)). A disordered region spans residues 481–535 (CSQDEEPTLSPDQPVMSTSSVEPAGVADSNGGTPGIESRKSSSKTRRDKEKPGCK). Over residues 517-533 (ESRKSSSKTRRDKEKPG) the composition is skewed to basic and acidic residues. Residues 528-584 (DKEKPGCKSCGETFNSITKRRYRCKLCGEVICRKCSEFKAENSKQSRVCRECFLEEP) form an FYVE-type zinc finger. Zn(2+)-binding residues include C534, C537, C551, C554, C559, C562, C576, and C579. Disordered stretches follow at residues 586–612 (VPPS…DPRP) and 712–733 (GDTA…TDTP). One can recognise a PH 2 domain in the interval 612 to 711 (PSLLCGTLNL…WLKALGTAVH (100 aa)). T732 is subject to Phosphothreonine.

In terms of tissue distribution, detected in adult brain, spleen, lung and skeletal muscle. Detected in embryos from 7 dpc to 17 dpc.

The protein resides in the cytoplasm. Its subcellular location is the cytoskeleton. Functionally, promotes the formation of filopodia. May activate CDC42, a member of the Ras-like family of Rho- and Rac proteins, by exchanging bound GDP for free GTP. Plays a role in regulating the actin cytoskeleton and cell shape. The sequence is that of FYVE, RhoGEF and PH domain-containing protein 3 (Fgd3) from Mus musculus (Mouse).